A 132-amino-acid polypeptide reads, in one-letter code: UPF0299 membrane protein YohJ (132 aa).

The next 4 membrane-spanning stretches (helical) occupy residues 7–27 (IIWQ…AGIF), 31–51 (LLPV…VLLA), 63–83 (GCYV…VGVM), and 93–113 (FGPV…VVSW).

The protein belongs to the UPF0299 family.

The protein localises to the cell inner membrane. In Shigella boydii serotype 18 (strain CDC 3083-94 / BS512), this protein is UPF0299 membrane protein YohJ.